The sequence spans 354 residues: Erythroferrone (354 aa).

Positions 1 to 28 are cleaved as a signal peptide; the sequence is MAPARRPAGARLLLVYAGLLAAAAAGLG. 2 stretches are compositionally biased toward low complexity: residues 26–37 and 51–62; these read GLGSPEPGAPSR and PRGPGESRAGPA. The disordered stretch occupies residues 26–123; the sequence is GLGSPEPGAP…PGPPGPQGPP (98 aa). A compositionally biased stretch (basic and acidic residues) spans 69-80; it reads TAERAHSVDPRD. The segment covering 94–107 has biased composition (basic residues); it reads NGKKRSRGKAKKLK. Residues P111, P113, P114, P116, P117, and P119 each carry the hydroxyproline modification. The span at 111–123 shows a compositional bias: pro residues; sequence PGPPGPPGPQGPP. Residues 199–354 form the C1q domain; sequence APRVEAAFLC…SHFSAVLLGV (156 aa). 3 N-linked (GlcNAc...) asparagine glycosylation sites follow: N243, N295, and N333.

This sequence belongs to the adipolin/erythroferrone family. As to quaternary structure, homodimer; disulfide-linked. Forms trimer, hexamers and higher molecular weight oligomers. May form heteromeric complexes with C1QTNF2 and C1QTNF12 and, to a lesser extent, with C1QTNF5 and C1QTNF10. Interacts with BMP5 and BMP7; the interaction inhibits BMP-induced transcription of HAMP. Interacts with BMP6; the interaction inhibits BMP-induced transcription of HAMP. Interacts with BMP2. Interacts with heterodimers composed of BMP2 and BMP6 in vitro, the interaction inhibits the heterodimer binding to its receptor BMPR1A /ALK3 and thereby suppresses expression of HAMP. In terms of processing, N-glycosylated; required for secretion of the mature protein.

It is found in the secreted. In terms of biological role, iron-regulatory hormone that acts as an erythroid regulator after hemorrhage: produced by erythroblasts following blood loss and mediates suppression of hepcidin (HAMP) expression in the liver, thereby promoting increased iron absorption and mobilization from stores. Promotes lipid uptake into adipocytes and hepatocytes via transcriptional up-regulation of genes involved in fatty acid uptake. Inhibits apoptosis and inflammatory response in cardiomyocytes via promotion of sphingosine-1-phosphate (S1P) and cAMP-dependent activation of AKT signaling. Inhibits autophagy induced by nutrient deficiency in hepatocytes via promoting the phosphorylation of IRS1, AKT, and MTOR, and thereby subsequent activation of the AKT-MTOR signaling pathway. Negatively regulates the differentiation of osteoblasts, potentially via sequestering BMP2, and thereby inhibits the activation of SMAD signaling. The reduction in BMP2 signaling in osteoblasts also results in an increase in expression of the osteoclastogenesis-promoting factors TNFSF11/RANKL and SOST, thereby indirectly promotes bone resorption. The polypeptide is Erythroferrone (Homo sapiens (Human)).